The chain runs to 220 residues: uncharacterized protein (220 aa).

This is an uncharacterized protein from Archaeoglobus fulgidus (strain ATCC 49558 / DSM 4304 / JCM 9628 / NBRC 100126 / VC-16).